A 569-amino-acid chain; its full sequence is 2-succinyl-5-enolpyruvyl-6-hydroxy-3-cyclohexene-1-carboxylate synthase (569 aa).

The protein belongs to the TPP enzyme family. MenD subfamily. As to quaternary structure, homodimer. Mg(2+) serves as cofactor. Requires Mn(2+) as cofactor. It depends on thiamine diphosphate as a cofactor.

It catalyses the reaction isochorismate + 2-oxoglutarate + H(+) = 5-enolpyruvoyl-6-hydroxy-2-succinyl-cyclohex-3-ene-1-carboxylate + CO2. It functions in the pathway quinol/quinone metabolism; 1,4-dihydroxy-2-naphthoate biosynthesis; 1,4-dihydroxy-2-naphthoate from chorismate: step 2/7. It participates in quinol/quinone metabolism; menaquinone biosynthesis. Catalyzes the thiamine diphosphate-dependent decarboxylation of 2-oxoglutarate and the subsequent addition of the resulting succinic semialdehyde-thiamine pyrophosphate anion to isochorismate to yield 2-succinyl-5-enolpyruvyl-6-hydroxy-3-cyclohexene-1-carboxylate (SEPHCHC). The sequence is that of 2-succinyl-5-enolpyruvyl-6-hydroxy-3-cyclohexene-1-carboxylate synthase from Shewanella halifaxensis (strain HAW-EB4).